The following is a 146-amino-acid chain: Prolactin-inducible protein homolog (146 aa).

Residues 1–26 (MQGLSFTSTAATFFLVLCLQLGINEG) form the signal peptide. A Pyrrolidone carboxylic acid modification is found at Gln27. N-linked (GlcNAc...) asparagine glycosylation occurs at Asn29. Intrachain disulfides connect Cys65/Cys91 and Cys89/Cys123.

This sequence belongs to the PIP family. As to quaternary structure, monomer. Interacts with AZGP1.

The protein resides in the secreted. The sequence is that of Prolactin-inducible protein homolog (Pip) from Rattus norvegicus (Rat).